The sequence spans 636 residues: Autophagy-related protein 20 (636 aa).

Disordered regions lie at residues 1–68 (MQIN…QPHE) and 84–163 (NYMQ…EGKK). A compositionally biased stretch (polar residues) spans 10-23 (NSVTHLENNSPSRL). Residues 27 to 49 (KTVEEHKEHEPDLQTQSEMRRES) show a composition bias toward basic and acidic residues. Residues 50–64 (NGSPKDTAVTNQNGD) show a composition bias toward polar residues. Residues 122–133 (NRRKNSKERRRS) show a composition bias toward basic residues. Residues 160-305 (EGKKRAQILE…DFLDPNNKNW (146 aa)) enclose the PX domain. The a 1,2-diacyl-sn-glycero-3-phospho-(1D-myo-inositol-3-phosphate) site is built by arginine 196, serine 198, lysine 222, and arginine 271.

It belongs to the sorting nexin family.

It is found in the endosome membrane. It localises to the preautophagosomal structure membrane. In terms of biological role, required for cytoplasm to vacuole transport (Cvt), pexophagy and mitophagy. Also involved in endoplasmic reticulum-specific autophagic process and is essential for the survival of cells subjected to severe ER stress. Functions in protein retrieval from the endocytic pathway. In Kluyveromyces lactis (strain ATCC 8585 / CBS 2359 / DSM 70799 / NBRC 1267 / NRRL Y-1140 / WM37) (Yeast), this protein is Autophagy-related protein 20 (ATG20).